Reading from the N-terminus, the 466-residue chain is Ribosomal protein uS12 methylthiotransferase RimO (466 aa).

Residues 16 to 127 enclose the MTTase N-terminal domain; it reads PKVAFAHLGC…IVDVLQRVEA (112 aa). Cys-25, Cys-61, Cys-90, Cys-165, Cys-169, and Cys-172 together coordinate [4Fe-4S] cluster. The 230-residue stretch at 151–380 folds into the Radical SAM core domain; sequence TTDQAVAYLK…MALQQPIAAE (230 aa). The TRAM domain maps to 383–454; that stretch reads QRWVGKTVDV…IYDLTGHIVG (72 aa).

The protein belongs to the methylthiotransferase family. RimO subfamily. [4Fe-4S] cluster is required as a cofactor.

The protein localises to the cytoplasm. The catalysed reaction is L-aspartate(89)-[ribosomal protein uS12]-hydrogen + (sulfur carrier)-SH + AH2 + 2 S-adenosyl-L-methionine = 3-methylsulfanyl-L-aspartate(89)-[ribosomal protein uS12]-hydrogen + (sulfur carrier)-H + 5'-deoxyadenosine + L-methionine + A + S-adenosyl-L-homocysteine + 2 H(+). Its function is as follows. Catalyzes the methylthiolation of an aspartic acid residue of ribosomal protein uS12. In Synechococcus sp. (strain CC9902), this protein is Ribosomal protein uS12 methylthiotransferase RimO.